A 155-amino-acid chain; its full sequence is Ribosomal RNA large subunit methyltransferase H (155 aa).

S-adenosyl-L-methionine-binding positions include leucine 72, glycine 103, and 122–127 (LSALTL).

It belongs to the RNA methyltransferase RlmH family. In terms of assembly, homodimer.

Its subcellular location is the cytoplasm. The enzyme catalyses pseudouridine(1915) in 23S rRNA + S-adenosyl-L-methionine = N(3)-methylpseudouridine(1915) in 23S rRNA + S-adenosyl-L-homocysteine + H(+). Specifically methylates the pseudouridine at position 1915 (m3Psi1915) in 23S rRNA. The polypeptide is Ribosomal RNA large subunit methyltransferase H (Citrobacter koseri (strain ATCC BAA-895 / CDC 4225-83 / SGSC4696)).